The following is a 460-amino-acid chain: CWF19-like protein 2 homolog (460 aa).

Disordered regions lie at residues 38-78, 103-175, and 193-227; these read GKTF…EDEK, KLES…TGTA, and RRHD…ESIK. A compositionally biased stretch (polar residues) spans 54-68; the sequence is GSQQVRNDVMKSSDS. The stretch at 84-106 forms a coiled coil; it reads KILKAEMKGDTDLVKKLKRKLES. Composition is skewed to basic and acidic residues over residues 113–131, 139–172, and 205–227; these read EPPK…DREG, RRSD…EEKT, and EMQK…ESIK. The stretch at 210–231 forms a coiled coil; sequence KKKSDEKDKKRKEKESIKEHKR.

It belongs to the CWF19 family.

The sequence is that of CWF19-like protein 2 homolog from Caenorhabditis elegans.